The chain runs to 1795 residues: Type III effector AvrE (1795 aa).

Over residues 1–18 (MQSPSIHRNTGSIIQPTV) the composition is skewed to polar residues. A disordered region spans residues 1 to 227 (MQSPSIHRNT…PPREPMLWRS (227 aa)). Over residues 60–75 (KSKAPQQKAATPPTAK) the composition is skewed to low complexity. Composition is skewed to polar residues over residues 97-109 (GFSN…THSA) and 117-127 (HPNQASSSGAQ). A compositionally biased stretch (basic and acidic residues) spans 129-154 (HEIHPEAAPRKNLRVRFDLPQDRLER). Polar residues predominate over residues 174-191 (ATRQFRSPDSHLQGSDGT). Low complexity predominate over residues 203–215 (PSSSGSKIGDSDG). Short sequence motifs (wxxxE) lie at residues 393–397 (WKIPE) and 829–833 (WQRFE). Residues 1461–1488 (QIGGSHTAPTGTPASAPGPTPASQTAAN) form a disordered region. A compositionally biased stretch (low complexity) spans 1467 to 1487 (TAPTGTPASAPGPTPASQTAA). The short motif at 1787 to 1790 (KKEG) is the ERMRS element.

The protein belongs to the AvrE family. In terms of assembly, in planta interaction assays, interacts with the A.thaliana protein phosphatase 2A (PP2A) via direct interaction/association with specific B' regulatory subunits.

The protein resides in the secreted. The protein localises to the host cell. It localises to the host cell membrane. With respect to regulation, polyamidoamine dendrimers inhibit channel and virulence activities. Major virulence factor that may function as a water- and solute-permeable channel dedicated to creating osmotic/water potential perturbation and a water- and nutrient-rich apoplast in which bacteria multiply within the infected plant tissues. Expression in Xenopus oocytes results in inward and outward currents, permeability to water and osmolarity-dependent oocyte swelling and bursting. Functionally, elicits cell death in host tomato leaves and in non-host Nicotiana tabacum leaves. Acts within plant cells and promotes lesion formation. The combined action of AvrE and HopM1 is particularly important in promoting bacterial growth in plants. Contributes to the down-regulation of a specific subset of A.thaliana genes during infection, including NHL13, which is required for antibacterial immunity. In Pseudomonas syringae pv. tomato (strain ATCC BAA-871 / DC3000), this protein is Type III effector AvrE.